A 378-amino-acid chain; its full sequence is Succinate--CoA ligase [ADP-forming] subunit beta (378 aa).

In terms of domain architecture, ATP-grasp spans 9–237 (RDIVARYGIP…IAGEPESEIK (229 aa)). ATP is bound by residues Lys-45, 52 to 54 (GRG), Ile-94, and Glu-99. Residues Asn-192 and Asp-206 each contribute to the Mg(2+) site. Substrate is bound by residues Asn-257 and 314 to 316 (GIT).

This sequence belongs to the succinate/malate CoA ligase beta subunit family. In terms of assembly, heterotetramer of two alpha and two beta subunits. Mg(2+) serves as cofactor.

It carries out the reaction succinate + ATP + CoA = succinyl-CoA + ADP + phosphate. It catalyses the reaction GTP + succinate + CoA = succinyl-CoA + GDP + phosphate. The protein operates within carbohydrate metabolism; tricarboxylic acid cycle; succinate from succinyl-CoA (ligase route): step 1/1. In terms of biological role, succinyl-CoA synthetase functions in the citric acid cycle (TCA), coupling the hydrolysis of succinyl-CoA to the synthesis of either ATP or GTP and thus represents the only step of substrate-level phosphorylation in the TCA. The beta subunit provides nucleotide specificity of the enzyme and binds the substrate succinate, while the binding sites for coenzyme A and phosphate are found in the alpha subunit. The protein is Succinate--CoA ligase [ADP-forming] subunit beta of Herpetosiphon aurantiacus (strain ATCC 23779 / DSM 785 / 114-95).